Reading from the N-terminus, the 321-residue chain is MIKYALVGDVGGTNARLALCDIASGEISQAKTYSGLDYPSLEAVIRVYLEEHKVEVKDGCIAIACPITGDWVAMTNHTWAFSIAEMKKNLGFSHLEIINDFTAVSMAIPMLKKEHLIQFGGAEPVEGKPIAVYGAGTGLGVAHLVHVDKRWVSLPGEGGHVDFAPNSEEEAIILEILRAEIGHVSAERVLSGPGLVNLYRAIVKADNRLPENLKPKDITERALADSCTDCRRALSLFCVIMGRFGGNLALNLGTFGGVFIAGGIVPRFLEFFKASGFRAAFEDKGRFKEYVHDIPVYLIVHDNPGLLGSGAHLRQTLGHIL.

8-13 (GDVGGT) contributes to the ATP binding site.

Belongs to the bacterial glucokinase family.

It localises to the cytoplasm. It catalyses the reaction D-glucose + ATP = D-glucose 6-phosphate + ADP + H(+). In Shigella boydii serotype 18 (strain CDC 3083-94 / BS512), this protein is Glucokinase.